Here is a 135-residue protein sequence, read N- to C-terminus: Ribonuclease P protein component (135 aa).

The protein belongs to the RnpA family. As to quaternary structure, consists of a catalytic RNA component (M1 or rnpB) and a protein subunit.

The catalysed reaction is Endonucleolytic cleavage of RNA, removing 5'-extranucleotides from tRNA precursor.. Functionally, RNaseP catalyzes the removal of the 5'-leader sequence from pre-tRNA to produce the mature 5'-terminus. It can also cleave other RNA substrates such as 4.5S RNA. The protein component plays an auxiliary but essential role in vivo by binding to the 5'-leader sequence and broadening the substrate specificity of the ribozyme. The polypeptide is Ribonuclease P protein component (Pseudomonas aeruginosa (strain ATCC 15692 / DSM 22644 / CIP 104116 / JCM 14847 / LMG 12228 / 1C / PRS 101 / PAO1)).